The chain runs to 261 residues: MIDPVAIQLGPISIRWYAICIVTGLVLAVYLAMKEAPRRKIIPDDILDFILVAFPVAIVGARLYYVAFEWDYYGKNLIKIIDFWNGGIAGIAIYGGLIAGAIVLYFFCRRRLIHPVDFLDIAAPSVMIAQSIGRWGNFANHEAYGAAVKSLDYLPSFIRENMYIEGSYRQPTFLYESVWNLIGFILIIVLRRRPKLLRQGEIAAFYLIWYGFGRMIIEGMRTDSLMFAGLRVSQWLSLILIFVGIGIIIYQRKKKAPYYQE.

4 consecutive transmembrane segments (helical) span residues Ile12–Ala32, Ile41–Ala61, Gly87–Phe107, and Leu112–Ile132. Arg134 lines the a 1,2-diacyl-sn-glycero-3-phospho-(1'-sn-glycerol) pocket. Helical transmembrane passes span Gln170–Leu190, Gly200–Met220, and Gly229–Ile249.

The protein belongs to the Lgt family.

It localises to the cell membrane. The catalysed reaction is L-cysteinyl-[prolipoprotein] + a 1,2-diacyl-sn-glycero-3-phospho-(1'-sn-glycerol) = an S-1,2-diacyl-sn-glyceryl-L-cysteinyl-[prolipoprotein] + sn-glycerol 1-phosphate + H(+). It functions in the pathway protein modification; lipoprotein biosynthesis (diacylglyceryl transfer). Its function is as follows. Catalyzes the transfer of the diacylglyceryl group from phosphatidylglycerol to the sulfhydryl group of the N-terminal cysteine of a prolipoprotein, the first step in the formation of mature lipoproteins. The polypeptide is Phosphatidylglycerol--prolipoprotein diacylglyceryl transferase (Streptococcus sanguinis (strain SK36)).